Here is a 372-residue protein sequence, read N- to C-terminus: Cytochrome b (372 aa).

A run of 4 helical transmembrane segments spans residues 25–45, 69–90, 105–125, and 170–190; these read FGSM…FLAI, WCLQ…YIHI, WMSG…GYVL, and FFAL…IHII. The heme b site is built by H75 and H89. Positions 174 and 188 each coordinate heme b. Residue H193 participates in a ubiquinone binding. Helical transmembrane passes span 218–238, 280–300, 312–332, and 339–358; these read YKDL…MSFS, LGGT…PFTH, MAQF…WAAS, and YITI…IINP.

The protein belongs to the cytochrome b family. In terms of assembly, the cytochrome bc1 complex contains 3 respiratory subunits (MT-CYB, CYC1 and UQCRFS1), 2 core proteins (UQCRC1 and UQCRC2) and probably 6 low-molecular weight proteins. The cofactor is heme b.

It localises to the mitochondrion inner membrane. Its function is as follows. Component of the ubiquinol-cytochrome c reductase complex (complex III or cytochrome b-c1 complex) that is part of the mitochondrial respiratory chain. The b-c1 complex mediates electron transfer from ubiquinol to cytochrome c. Contributes to the generation of a proton gradient across the mitochondrial membrane that is then used for ATP synthesis. The protein is Cytochrome b (MT-CYB) of Acrochordus granulatus (Rasp-skinned water snake).